The chain runs to 106 residues: Large ribosomal subunit protein uL24 (106 aa).

This sequence belongs to the universal ribosomal protein uL24 family. In terms of assembly, part of the 50S ribosomal subunit.

Functionally, one of two assembly initiator proteins, it binds directly to the 5'-end of the 23S rRNA, where it nucleates assembly of the 50S subunit. In terms of biological role, one of the proteins that surrounds the polypeptide exit tunnel on the outside of the subunit. In Clostridium acetobutylicum (strain ATCC 824 / DSM 792 / JCM 1419 / IAM 19013 / LMG 5710 / NBRC 13948 / NRRL B-527 / VKM B-1787 / 2291 / W), this protein is Large ribosomal subunit protein uL24.